We begin with the raw amino-acid sequence, 144 residues long: uncharacterized protein (144 aa).

The first 23 residues, 1-23 (MVIPLRNKYGILFLIAVCIMVSG), serve as a signal peptide directing secretion. Residues 119-144 (QNGQRKTMTRIESKTGREEKDEKSKS) form a disordered region. A compositionally biased stretch (basic and acidic residues) spans 127–144 (TRIESKTGREEKDEKSKS).

This is an uncharacterized protein from Bacillus subtilis (strain 168).